The chain runs to 263 residues: Uroplakin-3b-like protein 1 (263 aa).

Residues 1–33 (MDNSWRLGPAIGLSAGQSQLLVSLLLLLTRVQP) form the signal peptide. Residues 34-204 (GTDVAAPEHI…PGPQSPGTVV (171 aa)) are Extracellular-facing. Asn51, Asn76, and Asn91 each carry an N-linked (GlcNAc...) asparagine glycan. The chain crosses the membrane as a helical span at residues 205–225 (IIAILSILLAVLLTVLLAVLI). Topologically, residues 226–263 (YTCFNSCRSTSLSGPEEAGSVRRYTTHLAFSTPAEGAS) are cytoplasmic.

It belongs to the uroplakin-3 family.

The protein localises to the membrane. The protein is Uroplakin-3b-like protein 1 of Homo sapiens (Human).